A 222-amino-acid polypeptide reads, in one-letter code: Superoxide dismutase [Mn], mitochondrial (222 aa).

Residues 1-24 (MLCRAACSTGRRLGPVAGAAGSRH) constitute a mitochondrion transit peptide. His-50 is a Mn(2+) binding site. Tyr-58 carries the post-translational modification 3'-nitrotyrosine. An N6-acetyllysine; alternate mark is found at Lys-68 and Lys-75. Residues Lys-68 and Lys-75 each carry the N6-succinyllysine; alternate modification. His-98 provides a ligand contact to Mn(2+). Lys-114 carries the post-translational modification N6-acetyllysine. N6-acetyllysine; alternate occurs at positions 122 and 130. N6-succinyllysine; alternate is present on residues Lys-122 and Lys-130. Positions 183 and 187 each coordinate Mn(2+). Lys-202 carries the post-translational modification N6-acetyllysine.

Belongs to the iron/manganese superoxide dismutase family. In terms of assembly, homotetramer. Mn(2+) serves as cofactor. In terms of processing, nitrated under oxidative stress. Nitration coupled with oxidation inhibits the catalytic activity. Post-translationally, acetylation at Lys-122 decreases enzymatic activity. Deacetylated by SIRT3 upon exposure to ionizing radiations or after long fasting. Polyubiquitinated; leading to proteasomal degradation. Deubiquitinated by USP36 which increases protein stability.

The protein resides in the mitochondrion matrix. It carries out the reaction 2 superoxide + 2 H(+) = H2O2 + O2. In terms of biological role, destroys superoxide anion radicals which are normally produced within the cells and which are toxic to biological systems. This is Superoxide dismutase [Mn], mitochondrial (Sod2) from Mus musculus (Mouse).